Reading from the N-terminus, the 477-residue chain is UDP-N-acetylglucosamine pyrophosphorylase (477 aa).

Positions 109 to 112 (MAGG) match the Substrate binding motif. Residues 109-112 (MAGG), K123, and Q194 contribute to the UTP site. Phosphoserine is present on S218. UTP is bound at residue G221. N222 is a substrate binding site. D252 provides a ligand contact to UTP. Residues 302 to 303 (EY) carry the Substrate binding motif. Residue K377 coordinates UTP. Residue K409 coordinates substrate. Residue S461 is modified to Phosphoserine.

It belongs to the UDPGP type 1 family.

The protein localises to the cytoplasm. The enzyme catalyses N-acetyl-alpha-D-glucosamine 1-phosphate + UTP + H(+) = UDP-N-acetyl-alpha-D-glucosamine + diphosphate. It participates in nucleotide-sugar biosynthesis; UDP-N-acetyl-alpha-D-glucosamine biosynthesis; UDP-N-acetyl-alpha-D-glucosamine from N-acetyl-alpha-D-glucosamine 1-phosphate: step 1/1. Functionally, UDP-N-acetylglucosamine pyrophosphorylase that utilizes N-acetylglucosamine-1-phosphate as substrate. Together with AGM1, is involved in the production of UDP-N-acetylglucosamine from N-acetylglucosamine-6-phosphate. The protein is UDP-N-acetylglucosamine pyrophosphorylase (QRI1) of Saccharomyces cerevisiae (strain ATCC 204508 / S288c) (Baker's yeast).